Consider the following 448-residue polypeptide: MSKDYISIIDVKNHVGEEVTIGAWVANKSGKGKIAFLQLRDGTAFFQAVAFKPNFIEKFGEEAGLEKFNTIKHLNQETAIEIKGIVKEDKRSKFGYELDATDLKVIGTSDNYPITPKEHGTDFLMDHRHLWLRSRKQMAIMQIRNAVIYASYEFFDQNGFVKFDSPILSGNAAENTTDLFETDYFGEPAFLSQSGQLYLEAGAMAFGRVFDFGPVFRAEKSKTRRHLTEFWMMDAEYPFMSHEQSLDLQEAYVKTLIQGVLDRAPQALGILERDTDLLRKYIAQPFKRVSYDDAITLLQEHEEDEDTDYEHIEHGDDFGSPHETWISNYFGIPTFVVNYPASLKAFYMKPVPGNPDRVLCADLLAPEGYGEIIGGSERETDYNTLLAKIKENGLNPDDYAFYLDLRQYGSVPHCGFGLGLERMVTFVAGTKHIREAIPFPRMLHRIEP.

This sequence belongs to the class-II aminoacyl-tRNA synthetase family. In terms of assembly, homodimer.

It is found in the cytoplasm. It catalyses the reaction tRNA(Asn) + L-asparagine + ATP = L-asparaginyl-tRNA(Asn) + AMP + diphosphate + H(+). This is Asparagine--tRNA ligase from Streptococcus mutans serotype c (strain ATCC 700610 / UA159).